A 538-amino-acid chain; its full sequence is Aldehyde dehydrogenase family 2 member B4, mitochondrial (538 aa).

The N-terminal 38 residues, 1 to 38 (MAARRVSSLLSRSFSASSPLLFRSQGRNCYNGGILRRF), are a transit peptide targeting the mitochondrion. 282 to 287 (GSTDTG) is a binding site for NAD(+). Glu-305 serves as the catalytic Proton acceptor. Cys-339 functions as the Nucleophile in the catalytic mechanism.

The protein belongs to the aldehyde dehydrogenase family. As to quaternary structure, homotetramer.

The protein localises to the mitochondrion matrix. It catalyses the reaction an aldehyde + NAD(+) + H2O = a carboxylate + NADH + 2 H(+). In terms of biological role, possesses activity on acetaldehyde and glycolaldehyde in vitro. This chain is Aldehyde dehydrogenase family 2 member B4, mitochondrial (ALDH2B4), found in Arabidopsis thaliana (Mouse-ear cress).